The primary structure comprises 227 residues: Putative N-acetylmannosamine-6-phosphate 2-epimerase (227 aa).

This sequence belongs to the NanE family.

The catalysed reaction is an N-acyl-D-glucosamine 6-phosphate = an N-acyl-D-mannosamine 6-phosphate. It participates in amino-sugar metabolism; N-acetylneuraminate degradation; D-fructose 6-phosphate from N-acetylneuraminate: step 3/5. In terms of biological role, converts N-acetylmannosamine-6-phosphate (ManNAc-6-P) to N-acetylglucosamine-6-phosphate (GlcNAc-6-P). This Shouchella clausii (strain KSM-K16) (Alkalihalobacillus clausii) protein is Putative N-acetylmannosamine-6-phosphate 2-epimerase.